The primary structure comprises 758 residues: 5-methyltetrahydropteroyltriglutamate--homocysteine methyltransferase (758 aa).

5-methyltetrahydropteroyltri-L-glutamate is bound by residues 16-19 (RELK) and Lys116. L-homocysteine contacts are provided by residues 436–438 (IGS) and Glu489. Residues 436–438 (IGS) and Glu489 contribute to the L-methionine site. Residues 520-521 (RC) and Trp566 contribute to the 5-methyltetrahydropteroyltri-L-glutamate site. L-homocysteine is bound at residue Asp604. Asp604 is an L-methionine binding site. A 5-methyltetrahydropteroyltri-L-glutamate-binding site is contributed by Glu610. 3 residues coordinate Zn(2+): His646, Cys648, and Glu670. His699 serves as the catalytic Proton donor. Cys731 contributes to the Zn(2+) binding site.

Belongs to the vitamin-B12 independent methionine synthase family. It depends on Zn(2+) as a cofactor.

It carries out the reaction 5-methyltetrahydropteroyltri-L-glutamate + L-homocysteine = tetrahydropteroyltri-L-glutamate + L-methionine. It functions in the pathway amino-acid biosynthesis; L-methionine biosynthesis via de novo pathway; L-methionine from L-homocysteine (MetE route): step 1/1. Its function is as follows. Catalyzes the transfer of a methyl group from 5-methyltetrahydrofolate to homocysteine resulting in methionine formation. The polypeptide is 5-methyltetrahydropteroyltriglutamate--homocysteine methyltransferase (Nitrosococcus oceani (strain ATCC 19707 / BCRC 17464 / JCM 30415 / NCIMB 11848 / C-107)).